The sequence spans 163 residues: Late embryogenesis abundant protein Dc3 (163 aa).

2 disordered regions span residues 1–117 (MASH…GGLM) and 139–163 (FGMA…ARTE). 3 stretches are compositionally biased toward basic and acidic residues: residues 28–56 (TMKD…ESKD), 67–84 (GAVK…KEKT), and 91–113 (TKEK…KEKT). Tandem repeats lie at residues 32-42 (KAQAAKDKASE), 43-53 (MAGSARDRTVE), 65-75 (KAGAVKDKTCE), 76-86 (TAQAAKEKTGG), 87-97 (AMQATKEKASE), and 103-115 (KETA…KTGG). Residues 32-115 (KAQAAKDKAS…AVAGKEKTGG (84 aa)) are 6 X 11 AA approximate repeats. Over residues 152–163 (TTRVTRSSARTE) the composition is skewed to low complexity.

Belongs to the LEA type 4 family.

The chain is Late embryogenesis abundant protein Dc3 from Daucus carota (Wild carrot).